Reading from the N-terminus, the 374-residue chain is Putative glutamate--cysteine ligase 2-1 (374 aa).

It belongs to the glutamate--cysteine ligase type 2 family. YbdK subfamily.

The enzyme catalyses L-cysteine + L-glutamate + ATP = gamma-L-glutamyl-L-cysteine + ADP + phosphate + H(+). Functionally, ATP-dependent carboxylate-amine ligase which exhibits weak glutamate--cysteine ligase activity. This is Putative glutamate--cysteine ligase 2-1 from Saccharopolyspora erythraea (strain ATCC 11635 / DSM 40517 / JCM 4748 / NBRC 13426 / NCIMB 8594 / NRRL 2338).